We begin with the raw amino-acid sequence, 137 residues long: uncharacterized protein (137 aa).

The chain crosses the membrane as a helical span at residues 20 to 42; sequence TVLAFKGEGALALAGLLVMAAVA.

The protein resides in the host membrane. This is an uncharacterized protein from Dryophytes versicolor (chameleon treefrog).